We begin with the raw amino-acid sequence, 248 residues long: Triosephosphate isomerase (248 aa).

9-11 (NWK) serves as a coordination point for substrate. The Electrophile role is filled by His-92. Glu-164 serves as the catalytic Proton acceptor. Substrate-binding positions include Gly-170, Ser-210, and 231 to 232 (GG).

This sequence belongs to the triosephosphate isomerase family. Homodimer.

It localises to the cytoplasm. It carries out the reaction D-glyceraldehyde 3-phosphate = dihydroxyacetone phosphate. The protein operates within carbohydrate biosynthesis; gluconeogenesis. Its pathway is carbohydrate degradation; glycolysis; D-glyceraldehyde 3-phosphate from glycerone phosphate: step 1/1. In terms of biological role, involved in the gluconeogenesis. Catalyzes stereospecifically the conversion of dihydroxyacetone phosphate (DHAP) to D-glyceraldehyde-3-phosphate (G3P). The sequence is that of Triosephosphate isomerase from Mycoplasma capricolum subsp. capricolum (strain California kid / ATCC 27343 / NCTC 10154).